Reading from the N-terminus, the 193-residue chain is Inosine triphosphate pyrophosphatase (193 aa).

10-15 (TGNANK) is an ITP binding site. Glu-42 serves as a coordination point for Mg(2+). ITP contacts are provided by residues Lys-54, 70–71 (DT), Lys-87, 146–149 (FGWD), Lys-169, and 174–175 (HR).

It belongs to the HAM1 NTPase family. In terms of assembly, homodimer. The cofactor is Mg(2+). Mn(2+) is required as a cofactor.

The protein resides in the cytoplasm. Its subcellular location is the nucleus. The enzyme catalyses ITP + H2O = IMP + diphosphate + H(+). It catalyses the reaction dITP + H2O = dIMP + diphosphate + H(+). It carries out the reaction XTP + H2O = XMP + diphosphate + H(+). In terms of biological role, pyrophosphatase that hydrolyzes non-canonical purine nucleotides such as inosine triphosphate (ITP), deoxyinosine triphosphate (dITP) or xanthosine 5'-triphosphate (XTP) to their respective monophosphate derivatives. The enzyme does not distinguish between the deoxy- and ribose forms. Probably excludes non-canonical purines from RNA and DNA precursor pools, thus preventing their incorporation into RNA and DNA and avoiding chromosomal lesions. The chain is Inosine triphosphate pyrophosphatase from Mycosarcoma maydis (Corn smut fungus).